The chain runs to 69 residues: uncharacterized protein (69 aa).

Residues 32–54 (MLGAIDVAVAVASVPTLFVVTAI) form a helical membrane-spanning segment.

Its subcellular location is the membrane. This is an uncharacterized protein from Sinorhizobium fredii (strain NBRC 101917 / NGR234).